Here is a 256-residue protein sequence, read N- to C-terminus: Ubiquinone/menaquinone biosynthesis C-methyltransferase UbiE (256 aa).

Over residues 1-12 the composition is skewed to basic and acidic residues; that stretch reads MNDQRKGEHAEP. The tract at residues 1–21 is disordered; the sequence is MNDQRKGEHAEPTTHFGYQDV. S-adenosyl-L-methionine-binding positions include Thr-79, Asp-100, and 128–129; that span reads DA.

This sequence belongs to the class I-like SAM-binding methyltransferase superfamily. MenG/UbiE family.

It catalyses the reaction a 2-demethylmenaquinol + S-adenosyl-L-methionine = a menaquinol + S-adenosyl-L-homocysteine + H(+). The enzyme catalyses a 2-methoxy-6-(all-trans-polyprenyl)benzene-1,4-diol + S-adenosyl-L-methionine = a 5-methoxy-2-methyl-3-(all-trans-polyprenyl)benzene-1,4-diol + S-adenosyl-L-homocysteine + H(+). The protein operates within quinol/quinone metabolism; menaquinone biosynthesis; menaquinol from 1,4-dihydroxy-2-naphthoate: step 2/2. Its pathway is cofactor biosynthesis; ubiquinone biosynthesis. Functionally, methyltransferase required for the conversion of demethylmenaquinol (DMKH2) to menaquinol (MKH2) and the conversion of 2-polyprenyl-6-methoxy-1,4-benzoquinol (DDMQH2) to 2-polyprenyl-3-methyl-6-methoxy-1,4-benzoquinol (DMQH2). In Pseudomonas putida (strain W619), this protein is Ubiquinone/menaquinone biosynthesis C-methyltransferase UbiE.